The chain runs to 488 residues: 3-octaprenyl-4-hydroxybenzoate carboxy-lyase (488 aa).

N172 is a Mn(2+) binding site. Prenylated FMN is bound by residues 175–177, 189–191, and 194–195; these read IYR, RWL, and RG. A Mn(2+)-binding site is contributed by E238. D287 (proton donor) is an active-site residue.

Belongs to the UbiD family. In terms of assembly, homohexamer. It depends on prenylated FMN as a cofactor. The cofactor is Mn(2+).

The protein localises to the cell membrane. It catalyses the reaction a 4-hydroxy-3-(all-trans-polyprenyl)benzoate + H(+) = a 2-(all-trans-polyprenyl)phenol + CO2. Its pathway is cofactor biosynthesis; ubiquinone biosynthesis. In terms of biological role, catalyzes the decarboxylation of 3-octaprenyl-4-hydroxy benzoate to 2-octaprenylphenol, an intermediate step in ubiquinone biosynthesis. The polypeptide is 3-octaprenyl-4-hydroxybenzoate carboxy-lyase (Alkalilimnicola ehrlichii (strain ATCC BAA-1101 / DSM 17681 / MLHE-1)).